The chain runs to 424 residues: Microcin H47 secretion protein MchE (424 aa).

The Cytoplasmic portion of the chain corresponds to 1 to 25 (MFRQDALENRKMKWQGRAILLPGIP). Residues 26–46 (LWLIMLGSIVFITAFLMFIIV) form a helical membrane-spanning segment. The Periplasmic portion of the chain corresponds to 47–424 (GTYSRRVNVS…KHSATGPLND (378 aa)).

It belongs to the membrane fusion protein (MFP) (TC 8.A.1) family.

It localises to the cell inner membrane. Its function is as follows. Probably involved, in conjunction with MchF, in the secretion of microcin H47. The protein is Microcin H47 secretion protein MchE (mchE) of Escherichia coli.